A 167-amino-acid chain; its full sequence is Lipoprotein signal peptidase (167 aa).

The next 3 helical transmembrane spans lie at 10 to 30 (LIWL…KAWV), 68 to 88 (WQMW…TFWL), and 98 to 118 (SALP…DRFL). Catalysis depends on residues aspartate 124 and aspartate 142. Residues 138 to 158 (FNLADSAIVAGAIGIGLLSLF) form a helical membrane-spanning segment.

It belongs to the peptidase A8 family.

The protein localises to the cell inner membrane. It catalyses the reaction Release of signal peptides from bacterial membrane prolipoproteins. Hydrolyzes -Xaa-Yaa-Zaa-|-(S,diacylglyceryl)Cys-, in which Xaa is hydrophobic (preferably Leu), and Yaa (Ala or Ser) and Zaa (Gly or Ala) have small, neutral side chains.. It participates in protein modification; lipoprotein biosynthesis (signal peptide cleavage). This protein specifically catalyzes the removal of signal peptides from prolipoproteins. The chain is Lipoprotein signal peptidase from Xylella fastidiosa (strain M23).